The primary structure comprises 195 residues: U8 snoRNA-decapping enzyme (195 aa).

The region spanning 18-173 is the Nudix hydrolase domain; that stretch reads DWRHACHALL…IGAAREQLLE (156 aa). Substrate contacts are provided by His24, Arg50, and Phe57. Mn(2+) is bound by residues Gly59, Glu76, Glu80, and His99. The Nudix box signature appears at 61 to 82; the sequence is FVDAQDSCLEDGLNRELREELG. Gln170 contributes to the substrate binding site. Glu173 is a binding site for Mn(2+).

The protein belongs to the Nudix hydrolase family. NUDT16 subfamily. As to quaternary structure, homodimer. The cofactor is Mg(2+). Mn(2+) is required as a cofactor. Requires Co(2+) as cofactor. As to expression, expressed in brain, testis, spleen, lung, heart, liver, kidney and muscle (at protein level).

Its subcellular location is the nucleus. The protein resides in the nucleolus. The protein localises to the nucleoplasm. It is found in the cytoplasm. The enzyme catalyses a 5'-end (N(7)-methyl 5'-triphosphoguanosine)-ribonucleoside in mRNA + H2O = N(7)-methyl-GDP + a 5'-end phospho-ribonucleoside in mRNA + 2 H(+). The catalysed reaction is IDP + H2O = IMP + phosphate + H(+). It catalyses the reaction dIDP + H2O = dIMP + phosphate + H(+). It carries out the reaction a 5'-end NAD(+)-phospho-ribonucleoside in mRNA + H2O = a 5'-end phospho-ribonucleoside in mRNA + NAD(+) + H(+). The enzyme catalyses a 5'-end FAD-phospho-ribonucleoside in mRNA + H2O = a 5'-end phospho-adenosine-phospho-ribonucleoside in mRNA + FMN + 2 H(+). The catalysed reaction is a 5'-end CoA-ribonucleoside in mRNA + H2O = a 5'-end phospho-adenosine-phospho-ribonucleoside in mRNA + (R)-4'-phosphopantetheine + 2 H(+). In terms of biological role, RNA-binding and decapping enzyme that catalyzes the cleavage of the cap structure of snoRNAs and mRNAs in a metal-dependent manner. Part of the U8 snoRNP complex that is required for the accumulation of mature 5.8S and 28S rRNA. Has diphosphatase activity and removes m7G and/or m227G caps from U8 snoRNA and leaves a 5'monophosphate on the RNA. Also catalyzes the cleavage of the cap structure on mRNAs. Does not hydrolyze cap analog structures like 7-methylguanosine nucleoside triphosphate (m7GpppG). Also hydrolysis m7G- and m227G U3-capped RNAs but with less efficiencies. Has broad substrate specificity with manganese or cobalt as cofactor and can act on various RNA species. Binds to the U8 snoRNA; metal is not required for RNA-binding. May play a role in the regulation of snoRNAs and mRNAs degradation. Also acts as a phosphatase; hydrolyzes the non-canonical purine nucleotides inosine diphosphate (IDP) and deoxyinosine diphosphate (dITP) as well as guanosine diphosphate (GDP), deoxyguanosine diphosphate (dGDP), xanthine diphosphate (XDP), inosine triphosphate (ITP) and deoxyinosine triphosphate (ITP) to their respective monophosphate derivatives and does not distinguish between the deoxy- and ribose forms. The order of activity with different substrates is IDP &gt; dIDP &gt;&gt; GDP = dGDP &gt; XDP = ITP = dITP. Binds strongly to GTP, ITP and XTP. Participates in the hydrolysis of dIDP/IDP and probably excludes non-canonical purines from RNA and DNA precursor pools, thus preventing their incorporation into RNA and DNA and avoiding chromosomal lesions. Exhibits decapping activity towards NAD-capped RNAs and FAD-capped RNAs. Exhibits decapping activity towards dpCoA-capped RNAs in vitro. The polypeptide is U8 snoRNA-decapping enzyme (Nudt16) (Mus musculus (Mouse)).